The following is a 95-amino-acid chain: Co-chaperonin GroES (95 aa).

It belongs to the GroES chaperonin family. As to quaternary structure, heptamer of 7 subunits arranged in a ring. Interacts with the chaperonin GroEL.

The protein localises to the cytoplasm. Together with the chaperonin GroEL, plays an essential role in assisting protein folding. The GroEL-GroES system forms a nano-cage that allows encapsulation of the non-native substrate proteins and provides a physical environment optimized to promote and accelerate protein folding. GroES binds to the apical surface of the GroEL ring, thereby capping the opening of the GroEL channel. This Glaesserella parasuis serovar 5 (strain SH0165) (Haemophilus parasuis) protein is Co-chaperonin GroES.